A 184-amino-acid polypeptide reads, in one-letter code: Gastrokine-2 (184 aa).

The N-terminal stretch at 1–20 is a signal peptide; the sequence is MKSLVAFLVVLSILRIQSQA. Positions 54-151 constitute a BRICHOS domain; it reads HSGSCSSTTI…LCKHIPLYEG (98 aa). Cys-81 and Cys-143 are oxidised to a cystine.

In terms of assembly, heterodimer with TFF1; disulfide linked. Interacts with TFF2.

Its subcellular location is the secreted. This is Gastrokine-2 (Gkn2) from Rattus norvegicus (Rat).